We begin with the raw amino-acid sequence, 354 residues long: NADH-quinone oxidoreductase subunit H (354 aa).

The next 8 helical transmembrane spans lie at 25–45 (LVRI…LILW), 91–111 (WLYL…WAVI), 126–146 (LLYA…AGWA), 170–190 (MGFA…SEIV), 205–225 (FLSW…ISGI), 253–273 (MAFA…SALA), 290–310 (FIPG…VFIW), and 330–350 (VFLP…MSPL).

It belongs to the complex I subunit 1 family. In terms of assembly, NDH-1 is composed of 14 different subunits. Subunits NuoA, H, J, K, L, M, N constitute the membrane sector of the complex.

It localises to the cell inner membrane. The catalysed reaction is a quinone + NADH + 5 H(+)(in) = a quinol + NAD(+) + 4 H(+)(out). Functionally, NDH-1 shuttles electrons from NADH, via FMN and iron-sulfur (Fe-S) centers, to quinones in the respiratory chain. The immediate electron acceptor for the enzyme in this species is believed to be ubiquinone. Couples the redox reaction to proton translocation (for every two electrons transferred, four hydrogen ions are translocated across the cytoplasmic membrane), and thus conserves the redox energy in a proton gradient. This subunit may bind ubiquinone. The chain is NADH-quinone oxidoreductase subunit H from Burkholderia thailandensis (strain ATCC 700388 / DSM 13276 / CCUG 48851 / CIP 106301 / E264).